We begin with the raw amino-acid sequence, 985 residues long: NAD kinase 2, chloroplastic (985 aa).

Residues 1–62 (MFLCFCPCHV…KRRLRFVIRA (62 aa)) constitute a chloroplast transit peptide. Positions 335 to 380 (APKAEQVELFASIVSDSSKRPIYVHSKEGVWRTSAMVSRWKQYMTR) are calmodulin-binding. 2 disordered regions span residues 389 to 466 (SEES…PPGN) and 548 to 615 (FSNG…DEAG). Composition is skewed to basic and acidic residues over residues 390 to 399 (EESKRREVSE) and 413 to 429 (VPDEQTDKVSEINEVDS). Over residues 548 to 569 (FSNGNVHASDNTNKSISDNRGN) the composition is skewed to polar residues.

The protein belongs to the NAD kinase family. As to expression, expressed in leaves.

The protein resides in the plastid. Its subcellular location is the chloroplast. It catalyses the reaction NAD(+) + ATP = ADP + NADP(+) + H(+). Involved in chlorophyll synthesis and chloroplast protection against oxidative damage. This is NAD kinase 2, chloroplastic (NADK2) from Arabidopsis thaliana (Mouse-ear cress).